We begin with the raw amino-acid sequence, 183 residues long: ATP synthase subunit delta (183 aa).

It belongs to the ATPase delta chain family. In terms of assembly, F-type ATPases have 2 components, F(1) - the catalytic core - and F(0) - the membrane proton channel. F(1) has five subunits: alpha(3), beta(3), gamma(1), delta(1), epsilon(1). F(0) has three main subunits: a(1), b(2) and c(10-14). The alpha and beta chains form an alternating ring which encloses part of the gamma chain. F(1) is attached to F(0) by a central stalk formed by the gamma and epsilon chains, while a peripheral stalk is formed by the delta and b chains.

The protein localises to the cell inner membrane. Functionally, f(1)F(0) ATP synthase produces ATP from ADP in the presence of a proton or sodium gradient. F-type ATPases consist of two structural domains, F(1) containing the extramembraneous catalytic core and F(0) containing the membrane proton channel, linked together by a central stalk and a peripheral stalk. During catalysis, ATP synthesis in the catalytic domain of F(1) is coupled via a rotary mechanism of the central stalk subunits to proton translocation. Its function is as follows. This protein is part of the stalk that links CF(0) to CF(1). It either transmits conformational changes from CF(0) to CF(1) or is implicated in proton conduction. The polypeptide is ATP synthase subunit delta (Desulforapulum autotrophicum (strain ATCC 43914 / DSM 3382 / VKM B-1955 / HRM2) (Desulfobacterium autotrophicum)).